The following is a 328-amino-acid chain: Putative P2Y purinoceptor 10 (328 aa).

Residues 1-27 (MGSNSTSSAESNCNATYLPFQYSLYAT) lie on the Extracellular side of the membrane. Residues asparagine 4 and asparagine 14 are each glycosylated (N-linked (GlcNAc...) asparagine). Residues 28–48 (TYIFIFIPGLLANSAALWVLC) traverse the membrane as a helical segment. Residues 49–56 (RFISKKNK) lie on the Cytoplasmic side of the membrane. Residues 57–77 (AIIFMINLSVADLAHILSLPL) form a helical membrane-spanning segment. Topologically, residues 78-91 (RIYYYINRHWPFQR) are extracellular. A helical transmembrane segment spans residues 92–112 (ALCLLCFYLKYLNMYASIFFL). Cysteine 94 and cysteine 170 form a disulfide bridge. The Cytoplasmic portion of the chain corresponds to 113–137 (TCISLQRCLFLLKPFRARNWKRRYD). The helical transmembrane segment at 138 to 158 (VGISAVIWIVVGTACLPFPIL) threads the bilayer. Residues 159 to 182 (RNAGLANSTDSCFADLGYKQMDAV) lie on the Extracellular side of the membrane. A helical transmembrane segment spans residues 183–203 (VLVTMVVIAELAGFVIPVITI). At 204–233 (ACCTWKTTVSLKHPPIAFQGISERKKALRM) the chain is on the cytoplasmic side. A helical membrane pass occupies residues 234 to 254 (VFMCAAVFVICFTPYHINFIF). The Extracellular portion of the chain corresponds to 255–277 (YTMVKESIITSCPTVKSTLYFHP). The helical transmembrane segment at 278–298 (FSLCLASLCCLLDPILYYFMA) threads the bilayer. Residues 299–328 (SEFRDQLSRHGSSVTRSRLMSRESGSSMVN) lie on the Cytoplasmic side of the membrane.

Belongs to the G-protein coupled receptor 1 family.

Its subcellular location is the cell membrane. Functionally, putative receptor for purines coupled to G-proteins. The protein is Putative P2Y purinoceptor 10 (P2ry10) of Mus musculus (Mouse).